A 136-amino-acid polypeptide reads, in one-letter code: Flagellar assembly factor FliW 2 (136 aa).

This sequence belongs to the FliW family. As to quaternary structure, interacts with translational regulator CsrA and flagellin(s).

The protein resides in the cytoplasm. Acts as an anti-CsrA protein, binds CsrA and prevents it from repressing translation of its target genes, one of which is flagellin. Binds to flagellin and participates in the assembly of the flagellum. In Wolinella succinogenes (strain ATCC 29543 / DSM 1740 / CCUG 13145 / JCM 31913 / LMG 7466 / NCTC 11488 / FDC 602W) (Vibrio succinogenes), this protein is Flagellar assembly factor FliW 2.